We begin with the raw amino-acid sequence, 968 residues long: MSKAELKDFTFKSRHIGPTNEDEALMLQHLGYENAEEFISSVIPNEIFDSENNGVSIPDGCDQNKALTEINIISKKNVEHRSLIGLGYHSTVIPPVIQRNVLENPNWYTAYTPYQAEISQGRLEALFNFQTLISELTGLPISNASLLDEATAAAEAISLSLTVRKNKNANKFLVDQEILPQTLDVLKTRCEPLGISLEMFDNNNFEIDKNVFGILIQLPGKNGRIWDPTKIINDAHKCNAIVTIAIDPLAQVLIKPMGEFGADIVVGSAQRFGVPIAFGGPHAAFFATKEIYKRQIPGRIVGQSVDVEGNQALRLALQTREQHIRRDKATSNICTAQVLLAVLSSFYAVHHGPKGLKQIAENVVKYRSNFESILMNLEYPIEKYSAFDSVDVYCSEASEVIQLASEEGYNLRVLPIGSDFENAKGFGVTFDELTCDEEIYKLHQILAQVKGKKTHDLSNFIFENASLIDIPLREKSWLEQSVFNQYQSETDLMRYIHCLVSKDFSLVQGMIPLGSCTMKLNAAAELLPIEWREFSSIHPFAPHTQLTGFHEIINDLENWLSALTGFQGVSLQPNAGSQGEFAGLLVIRSWHQSLGEGHRNICLIPTSAHGTNPASAVMSGFKVVSVKCDEYGNVDLEDLKNKSKIHSKNLAALMVTYPSTHGVFEPNIREMCQVIHQEGGQVYLDGANLNAQVGICRPGSYGIDVCHLNLHKTFSIPHGGGGPGVGPIAVADHLVPYLPGHSIIKCGGQKAISAVSAAPFGSAGILPISWMYIRMMGSDGLRKASSIAILSANYLAKRLDPYYPVLFKDPNGLVAHECILDLRPLKSQLGIEVEDVAKRLMDYGFHAPTISWPVAGTLMVEPTESESLPELDRFCDAMIGIREEIEQIKLGKIDPINNPLKQSPHTLKTVTSDDWDRPYSRKEAAYPLPDQEKYKFWPSVSRINNAYGDRNLICSCPSVQDLEDINSV.

K712 carries the N6-(pyridoxal phosphate)lysine modification.

It belongs to the GcvP family. In terms of assembly, the glycine cleavage system is composed of four proteins: P, T, L and H. Requires pyridoxal 5'-phosphate as cofactor.

The catalysed reaction is N(6)-[(R)-lipoyl]-L-lysyl-[glycine-cleavage complex H protein] + glycine + H(+) = N(6)-[(R)-S(8)-aminomethyldihydrolipoyl]-L-lysyl-[glycine-cleavage complex H protein] + CO2. Functionally, the glycine cleavage system catalyzes the degradation of glycine. The P protein binds the alpha-amino group of glycine through its pyridoxal phosphate cofactor; CO(2) is released and the remaining methylamine moiety is then transferred to the lipoamide cofactor of the H protein. This chain is Glycine dehydrogenase (decarboxylating), found in Prochlorococcus marinus (strain NATL2A).